Here is a 75-residue protein sequence, read N- to C-terminus: Small ribosomal subunit protein bS18 (75 aa).

Belongs to the bacterial ribosomal protein bS18 family. Part of the 30S ribosomal subunit. Forms a tight heterodimer with protein bS6.

Binds as a heterodimer with protein bS6 to the central domain of the 16S rRNA, where it helps stabilize the platform of the 30S subunit. This chain is Small ribosomal subunit protein bS18, found in Psychromonas ingrahamii (strain DSM 17664 / CCUG 51855 / 37).